The sequence spans 292 residues: Geranyl diphosphate 2-C-methyltransferase (292 aa).

It belongs to the geranyl diphosphate 2-C-methyltransferase family. Mg(2+) serves as cofactor.

It carries out the reaction (2E)-geranyl diphosphate + S-adenosyl-L-methionine = (E)-2-methylgeranyl diphosphate + S-adenosyl-L-homocysteine + H(+). In terms of biological role, catalyzes the SAM-dependent methylation of geranyl diphosphate (GPP) to yield (E)-2-methylgeranyl diphosphate (2-MeGPP). In Streptomyces coelicolor (strain ATCC BAA-471 / A3(2) / M145), this protein is Geranyl diphosphate 2-C-methyltransferase.